The primary structure comprises 688 residues: MIOREX complex component 1 (688 aa).

The disordered stretch occupies residues 1–24 (MGLKITKGQLRTKDLNQSSSKSSQ). The transit peptide at 1-46 (MGLKITKGQLRTKDLNQSSSKSSQSSRIGVDTCIFTRMLPRINTAI) directs the protein to the mitochondrion.

Associates with the mitochondrial ribosome.

The protein localises to the mitochondrion. Functionally, component of MIOREX complexes, large expressome-like assemblies of ribosomes with factors involved in all the steps of post-transcriptional gene expression. This Saccharomyces cerevisiae (strain ATCC 204508 / S288c) (Baker's yeast) protein is MIOREX complex component 1.